The following is a 420-amino-acid chain: Anaerobic glycerol-3-phosphate dehydrogenase subunit B (420 aa).

This sequence belongs to the anaerobic G-3-P dehydrogenase subunit B family. As to quaternary structure, composed of a catalytic GlpA/B dimer and of membrane bound GlpC. The cofactor is FMN.

The catalysed reaction is a quinone + sn-glycerol 3-phosphate = dihydroxyacetone phosphate + a quinol. It functions in the pathway polyol metabolism; glycerol degradation via glycerol kinase pathway; glycerone phosphate from sn-glycerol 3-phosphate (anaerobic route): step 1/1. Its function is as follows. Conversion of glycerol 3-phosphate to dihydroxyacetone. Uses fumarate or nitrate as electron acceptor. This Pectobacterium carotovorum subsp. carotovorum (strain PC1) protein is Anaerobic glycerol-3-phosphate dehydrogenase subunit B.